Consider the following 295-residue polypeptide: Ribosomal RNA small subunit methyltransferase H (295 aa).

S-adenosyl-L-methionine-binding positions include 35–37, E55, F82, D103, and Q110; that span reads GGH.

It belongs to the methyltransferase superfamily. RsmH family.

The protein localises to the cytoplasm. It catalyses the reaction cytidine(1402) in 16S rRNA + S-adenosyl-L-methionine = N(4)-methylcytidine(1402) in 16S rRNA + S-adenosyl-L-homocysteine + H(+). In terms of biological role, specifically methylates the N4 position of cytidine in position 1402 (C1402) of 16S rRNA. The sequence is that of Ribosomal RNA small subunit methyltransferase H from Desulfotalea psychrophila (strain LSv54 / DSM 12343).